The following is a 453-amino-acid chain: Probable glycine dehydrogenase (decarboxylating) subunit 1 (453 aa).

The protein belongs to the GcvP family. N-terminal subunit subfamily. The glycine cleavage system is composed of four proteins: P, T, L and H. In this organism, the P 'protein' is a heterodimer of two subunits.

It catalyses the reaction N(6)-[(R)-lipoyl]-L-lysyl-[glycine-cleavage complex H protein] + glycine + H(+) = N(6)-[(R)-S(8)-aminomethyldihydrolipoyl]-L-lysyl-[glycine-cleavage complex H protein] + CO2. Its function is as follows. The glycine cleavage system catalyzes the degradation of glycine. The P protein binds the alpha-amino group of glycine through its pyridoxal phosphate cofactor; CO(2) is released and the remaining methylamine moiety is then transferred to the lipoamide cofactor of the H protein. The polypeptide is Probable glycine dehydrogenase (decarboxylating) subunit 1 (Caulobacter sp. (strain K31)).